Here is a 298-residue protein sequence, read N- to C-terminus: Protease HtpX homolog (298 aa).

2 helical membrane-spanning segments follow: residues 16-36 and 38-58; these read VMFG…YLFW and SWVS…LIMI. A Zn(2+)-binding site is contributed by His144. Residue Glu145 is part of the active site. Zn(2+) is bound at residue His148. A run of 2 helical transmembrane segments spans residues 159-179 and 197-217; these read IALA…NWFW and IIGL…ASIA. Zn(2+) is bound at residue Glu226.

This sequence belongs to the peptidase M48B family. It depends on Zn(2+) as a cofactor.

It is found in the cell membrane. This Levilactobacillus brevis (strain ATCC 367 / BCRC 12310 / CIP 105137 / JCM 1170 / LMG 11437 / NCIMB 947 / NCTC 947) (Lactobacillus brevis) protein is Protease HtpX homolog.